Here is a 214-residue protein sequence, read N- to C-terminus: MKFFIDTANVDEIKKAWEVGVIDGVTTNPSLLAKEGKEPVSLLKEICQIVDGPVSAEAVSLKYEDMLKESIELSKIHSNIVIKIPMTEDGLKTVRKLSQEGIKTNVTLVFSPTQALLAAKAGATYVSPFVGRLDDISHFGMELVRDIQIIFENYGFDTEVIVASIRNPLHVLEAARIGADIATIPYSVIKQLIKHPLTDIGIERFLKDWEKLKK.

Lys83 functions as the Schiff-base intermediate with substrate in the catalytic mechanism.

Belongs to the transaldolase family. Type 3B subfamily.

It localises to the cytoplasm. It catalyses the reaction D-sedoheptulose 7-phosphate + D-glyceraldehyde 3-phosphate = D-erythrose 4-phosphate + beta-D-fructose 6-phosphate. It functions in the pathway carbohydrate degradation; pentose phosphate pathway; D-glyceraldehyde 3-phosphate and beta-D-fructose 6-phosphate from D-ribose 5-phosphate and D-xylulose 5-phosphate (non-oxidative stage): step 2/3. Its function is as follows. Transaldolase is important for the balance of metabolites in the pentose-phosphate pathway. The chain is Probable transaldolase from Thermodesulfovibrio yellowstonii (strain ATCC 51303 / DSM 11347 / YP87).